The primary structure comprises 66 residues: Beta-toxin Cb1 (66 aa).

An LCN-type CS-alpha/beta domain is found at 1 to 66 (KEGYIVNHST…VWPLPKKTCN (66 aa)). Cystine bridges form between cysteine 12/cysteine 65, cysteine 16/cysteine 41, cysteine 25/cysteine 46, and cysteine 29/cysteine 48.

This sequence belongs to the long (4 C-C) scorpion toxin superfamily. Sodium channel inhibitor family. Beta subfamily. As to expression, expressed by the venom gland.

The protein resides in the secreted. With respect to regulation, inhibited by human antibodies scFvs 10FG2 and LR. Its function is as follows. Beta toxins bind voltage-independently at site-4 of sodium channels (Nav) and reduces peak current and shifts the voltage of activation toward more negative potentials thereby affecting sodium channel activation and promoting spontaneous and repetitive firing. Has an inhibitory effect on voltage-gated sodium channel hNav1.6/SCN8A, affecting both the activation and inactivation processes. This toxin is active against mammals and lethal to mice. In Centruroides baergi (Scorpion), this protein is Beta-toxin Cb1.